The following is a 191-amino-acid chain: Ribosome hibernation promotion factor (191 aa).

The tract at residues 100-123 (KQRQEGRPEPLPGPAEAEVNAQGS) is disordered.

It belongs to the HPF/YfiA ribosome-associated protein family. Long HPF subfamily. Interacts with 100S ribosomes.

The protein localises to the cytoplasm. Its function is as follows. Required for dimerization of active 70S ribosomes into 100S ribosomes in stationary phase; 100S ribosomes are translationally inactive and sometimes present during exponential growth. The sequence is that of Ribosome hibernation promotion factor from Deinococcus radiodurans (strain ATCC 13939 / DSM 20539 / JCM 16871 / CCUG 27074 / LMG 4051 / NBRC 15346 / NCIMB 9279 / VKM B-1422 / R1).